A 232-amino-acid chain; its full sequence is 7-cyano-7-deazaguanine synthase (232 aa).

7–17 (CSGGLDSVSLA) serves as a coordination point for ATP. Zn(2+)-binding residues include Cys185, Cys193, Cys196, and Cys199.

The protein belongs to the QueC family. It depends on Zn(2+) as a cofactor.

It catalyses the reaction 7-carboxy-7-deazaguanine + NH4(+) + ATP = 7-cyano-7-deazaguanine + ADP + phosphate + H2O + H(+). The protein operates within purine metabolism; 7-cyano-7-deazaguanine biosynthesis. In terms of biological role, catalyzes the ATP-dependent conversion of 7-carboxy-7-deazaguanine (CDG) to 7-cyano-7-deazaguanine (preQ(0)). The chain is 7-cyano-7-deazaguanine synthase from Chelativorans sp. (strain BNC1).